We begin with the raw amino-acid sequence, 297 residues long: IMPACT family member C14C8.09c (297 aa).

A coiled-coil region spans residues 225-255; that stretch reads LRSELQEKNQKDKKKEVNKLEEKMTNAKEPN. 2 stretches are compositionally biased toward basic and acidic residues: residues 228–250 and 280–297; these read ELQEKNQKDKKKEVNKLEEKMTN and SVDHKEASKIIKDVEKEE. A disordered region spans residues 228-297; it reads ELQEKNQKDK…KIIKDVEKEE (70 aa).

It belongs to the IMPACT family.

The chain is IMPACT family member C14C8.09c from Schizosaccharomyces pombe (strain 972 / ATCC 24843) (Fission yeast).